A 515-amino-acid chain; its full sequence is Vesicular acetylcholine transporter (515 aa).

Residues 1-40 (MGVTMAVGLAKAAMGKISSAIGERSKRISGAMNEPRRKRK) lie on the Cytoplasmic side of the membrane. The helical transmembrane segment at 41–61 (ILLVIVCIAMLLDNMLYMVIV) threads the bilayer. Over 62–112 (PIIPNYLETIRTYKLVYITTPSNGTNGSLLNSTQRAVLERNPNANEDIQIG) the chain is Lumenal, vesicle. N-linked (GlcNAc...) asparagine glycosylation is found at N84, N87, and N92. The chain crosses the membrane as a helical span at residues 113–133 (VLFASKAILQLLSNPFTGTFI). The Cytoplasmic portion of the chain corresponds to 134 to 139 (DRVGYD). The helical transmembrane segment at 140 to 160 (IPLLIGLTIMFFSTITFAFGE) threads the bilayer. At 161 to 169 (SYAVLFAAR) the chain is on the lumenal, vesicle side. The helical transmembrane segment at 170–190 (SLQGLGSAFADTSGIAMIADK) threads the bilayer. The Cytoplasmic segment spans residues 191–201 (YTEESERTQAL). The chain crosses the membrane as a helical span at residues 202–222 (GIALAFISFGSLVAPPFGGVL). Residues 223 to 229 (YQFAGKW) lie on the Lumenal, vesicle side of the membrane. Residues 230–250 (VPFLVLSFVCLLDGILLLMVV) traverse the membrane as a helical segment. The Cytoplasmic segment spans residues 251–271 (TPFASRTRENMLQGTPIYKLM). Residues 272-292 (IDPYIAVVAGALTTCNIPLAF) form a helical membrane-spanning segment. Residues 293–310 (LEPTISNWMKKTMNASEW) lie on the Lumenal, vesicle side of the membrane. N-linked (GlcNAc...) asparagine glycosylation occurs at N306. Residues 311–331 (QMGITWLPAFFPHILGVYITV) form a helical membrane-spanning segment. The Cytoplasmic portion of the chain corresponds to 332 to 341 (KLAAKYPNYQ). A helical membrane pass occupies residues 342–362 (WFYGAVGLVIIGASSCTIPAC). At 363–367 (RNFEE) the chain is on the lumenal, vesicle side. Residues 368 to 388 (LIIPLCALCFGIALVDTALLP) form a helical membrane-spanning segment. The Cytoplasmic portion of the chain corresponds to 389–404 (TLAFLVDIRYVSVYGS). The chain crosses the membrane as a helical span at residues 405–425 (VYAIADISYSVAYALGPIMAG). Residues 426 to 432 (QIVHDLG) lie on the Lumenal, vesicle side of the membrane. Residues 433 to 453 (FVQLNLGMGLVNILYAPALLF) traverse the membrane as a helical segment. Residues 454-515 (LRNVCQMKPS…VLSDQEGYSE (62 aa)) are Cytoplasmic-facing. Positions 489-515 (AAKEPHGSSSGNHSVHAVLSDQEGYSE) are disordered.

Belongs to the major facilitator superfamily. Vesicular transporter family. Electric lobe.

It localises to the membrane. In terms of biological role, involved in acetylcholine transport into synaptic vesicles. This Tetronarce californica (Pacific electric ray) protein is Vesicular acetylcholine transporter.